The sequence spans 310 residues: 300 kDa antigen AG231 (310 aa).

The interval 1–23 (VTGSCVVTGSCVVTDSCVVTGSC) is 4 X 6 AA tandem repeats of V-V-T-G-S-C. The tract at residues 29-106 (VTTQESVTTQ…TQEPVTVEEH (78 aa)) is 13 X 6 AA tandem repeats of V-V-[TI]-[QE]-E-[PH]. Low complexity predominate over residues 53-101 (VTIEEPVTTQEPVTIEEPVTTQEPVTTQEPVTTQEPVTTQEPVTTQEPV). Residues 53-310 (VTIEEPVTTQ…FGRGNKNDKK (258 aa)) are disordered. 2 stretches are compositionally biased toward basic and acidic residues: residues 103 to 114 (VEEHIDEKKGSE) and 147 to 160 (NKND…KKPS). Residues 107 to 152 (IDEKKGSEGDNISLSSLSEETEEKSHTKKKKSSWLKFGRGNKNDKK) form a 45 AA repeat 1 repeat. Residues 176–190 (TDSQISVNAQDSVTI) show a composition bias toward polar residues. The tract at residues 188–265 (VTIQEPTATQ…TQEPSTTQEH (78 aa)) is 13 X 6 AA approximate tandem repeats. The span at 191-235 (QEPTATQEPPTTQELTATQEPTTTQETVTEQEPTTTQETVTAQEP) shows a compositional bias: low complexity. Over residues 236 to 263 (ITTQEPVTAQEPVTTQELIATQEPSTTQ) the composition is skewed to polar residues. The span at 264–273 (EHADEKKASE) shows a compositional bias: basic and acidic residues. One copy of the 45 AA repeat 2 repeat lies at 266–310 (ADEKKASEGDNISLSRLSEETEEKSHTKKKSSWLKFGRGNKNDKK).

This is 300 kDa antigen AG231 (FIRA) from Plasmodium falciparum (isolate FC27 / Papua New Guinea).